The sequence spans 87 residues: Small ribosomal subunit protein bS20 (87 aa).

This sequence belongs to the bacterial ribosomal protein bS20 family.

Its function is as follows. Binds directly to 16S ribosomal RNA. This chain is Small ribosomal subunit protein bS20, found in Shigella flexneri.